A 326-amino-acid polypeptide reads, in one-letter code: Biotin synthase (326 aa).

The Radical SAM core domain maps to 50 to 279; sequence FNGEKVDVEQ…ESVIKISGGR (230 aa). [4Fe-4S] cluster contacts are provided by C68, C72, and C75. Residues C112, C145, C204, and K274 each contribute to the [2Fe-2S] cluster site.

The protein belongs to the radical SAM superfamily. Biotin synthase family. Homodimer. [4Fe-4S] cluster is required as a cofactor. It depends on [2Fe-2S] cluster as a cofactor.

The catalysed reaction is (4R,5S)-dethiobiotin + (sulfur carrier)-SH + 2 reduced [2Fe-2S]-[ferredoxin] + 2 S-adenosyl-L-methionine = (sulfur carrier)-H + biotin + 2 5'-deoxyadenosine + 2 L-methionine + 2 oxidized [2Fe-2S]-[ferredoxin]. Its pathway is cofactor biosynthesis; biotin biosynthesis; biotin from 7,8-diaminononanoate: step 2/2. Its function is as follows. Catalyzes the conversion of dethiobiotin (DTB) to biotin by the insertion of a sulfur atom into dethiobiotin via a radical-based mechanism. The polypeptide is Biotin synthase (Nitrosopumilus maritimus (strain SCM1)).